Consider the following 304-residue polypeptide: Voltage-dependent anion channel-forming protein YneE (304 aa).

4 helical membrane-spanning segments follow: residues 28 to 48 (LLLN…YTML), 50 to 70 (IKFT…FLGF), 209 to 229 (AYTL…PFAL), and 235 to 255 (YMTP…DALA).

The protein belongs to the anion channel-forming bestrophin (TC 1.A.46) family.

It is found in the cell membrane. This is Voltage-dependent anion channel-forming protein YneE (yneE) from Salmonella typhi.